The primary structure comprises 428 residues: 3-phosphoshikimate 1-carboxyvinyltransferase (428 aa).

Positions 22, 23, and 27 each coordinate 3-phosphoshikimate. Residue Lys-22 coordinates phosphoenolpyruvate. Positions 94 and 122 each coordinate phosphoenolpyruvate. Residues Ser-167, Gln-169, Asp-314, and Lys-341 each coordinate 3-phosphoshikimate. Gln-169 serves as a coordination point for phosphoenolpyruvate. Asp-314 (proton acceptor) is an active-site residue. Residues Arg-345 and Arg-387 each coordinate phosphoenolpyruvate.

The protein belongs to the EPSP synthase family. Monomer.

It localises to the cytoplasm. The enzyme catalyses 3-phosphoshikimate + phosphoenolpyruvate = 5-O-(1-carboxyvinyl)-3-phosphoshikimate + phosphate. The protein operates within metabolic intermediate biosynthesis; chorismate biosynthesis; chorismate from D-erythrose 4-phosphate and phosphoenolpyruvate: step 6/7. Functionally, catalyzes the transfer of the enolpyruvyl moiety of phosphoenolpyruvate (PEP) to the 5-hydroxyl of shikimate-3-phosphate (S3P) to produce enolpyruvyl shikimate-3-phosphate and inorganic phosphate. This Geotalea uraniireducens (strain Rf4) (Geobacter uraniireducens) protein is 3-phosphoshikimate 1-carboxyvinyltransferase.